The primary structure comprises 540 residues: Chaperonin GroEL (540 aa).

Residues 29 to 32 (TLGP), 86 to 90 (DGTTT), G413, 478 to 480 (DAL), and D494 contribute to the ATP site.

Belongs to the chaperonin (HSP60) family. Forms a cylinder of 14 subunits composed of two heptameric rings stacked back-to-back. Interacts with the co-chaperonin GroES.

Its subcellular location is the cytoplasm. The enzyme catalyses ATP + H2O + a folded polypeptide = ADP + phosphate + an unfolded polypeptide.. Its function is as follows. Together with its co-chaperonin GroES, plays an essential role in assisting protein folding. The GroEL-GroES system forms a nano-cage that allows encapsulation of the non-native substrate proteins and provides a physical environment optimized to promote and accelerate protein folding. This is Chaperonin GroEL from Clostridioides difficile (Peptoclostridium difficile).